The primary structure comprises 391 residues: 8-amino-7-oxononanoate synthase (391 aa).

Substrate is bound at residue Arg19. 106–107 (GY) contacts pyridoxal 5'-phosphate. His131 lines the substrate pocket. Pyridoxal 5'-phosphate is bound by residues Ser178, His206, and Thr234. Lys237 is subject to N6-(pyridoxal phosphate)lysine. Substrate is bound at residue Thr353.

It belongs to the class-II pyridoxal-phosphate-dependent aminotransferase family. BioF subfamily. Homodimer. Pyridoxal 5'-phosphate serves as cofactor.

The catalysed reaction is 6-carboxyhexanoyl-[ACP] + L-alanine + H(+) = (8S)-8-amino-7-oxononanoate + holo-[ACP] + CO2. It functions in the pathway cofactor biosynthesis; biotin biosynthesis. In terms of biological role, catalyzes the decarboxylative condensation of pimeloyl-[acyl-carrier protein] and L-alanine to produce 8-amino-7-oxononanoate (AON), [acyl-carrier protein], and carbon dioxide. This chain is 8-amino-7-oxononanoate synthase, found in Pelobacter propionicus (strain DSM 2379 / NBRC 103807 / OttBd1).